We begin with the raw amino-acid sequence, 95 residues long: Succinate dehydrogenase membrane anchor subunit (95 aa).

Over 1-19 the chain is Mitochondrial matrix; sequence MYKTLLAQVFFHSIAKKKL. A helical membrane pass occupies residues 20–40; that stretch reads YFFWLPRLFSLLLVPGFLFDI. Position 41 (glutamate 41) is a topological domain, mitochondrial intermembrane. A helical transmembrane segment spans residues 42-62; that stretch reads ILFLFHPIILLHASLGLSVII. Histidine 53 provides a ligand contact to heme. Residues 63 to 74 lie on the Mitochondrial matrix side of the membrane; the sequence is EDYIHIETIKFQ. A ubiquinone is bound at residue tyrosine 65. A helical transmembrane segment spans residues 75-95; it reads YLSLIKLLLVLLINLNILYLL.

Part of an enzyme complex containing four subunits: a flavoprotein, an iron-sulfur protein, plus two membrane-anchoring proteins. The cofactor is heme.

Its subcellular location is the mitochondrion inner membrane. Its pathway is carbohydrate metabolism; tricarboxylic acid cycle. Membrane-anchoring subunit of succinate dehydrogenase (SDH). The sequence is that of Succinate dehydrogenase membrane anchor subunit (SDH4) from Porphyra purpurea (Red seaweed).